Here is a 36-residue protein sequence, read N- to C-terminus: Cecropin-D (36 aa).

At Lys-36 the chain carries Lysine amide.

Belongs to the cecropin family.

It localises to the secreted. In terms of biological role, cecropins have lytic and antibacterial activity against several Gram-positive and Gram-negative bacteria. This chain is Cecropin-D, found in Antheraea pernyi (Chinese oak silk moth).